Here is a 307-residue protein sequence, read N- to C-terminus: Alpha N-terminal protein methyltransferase 1 (307 aa).

A compositionally biased stretch (low complexity) spans Glu-38–Ala-51. Residues Glu-38–Gly-60 are disordered. Residues Gly-123, Arg-128, Glu-145–Val-147, Leu-179–Gln-180, and Gln-195 contribute to the S-adenosyl-L-methionine site.

Belongs to the methyltransferase superfamily. NTM1 family.

The catalysed reaction is N-terminal L-alanyl-L-prolyl-L-lysyl-[protein] + 3 S-adenosyl-L-methionine = N-terminal N,N,N-trimethyl-L-alanyl-L-prolyl-L-lysyl-[protein] + 3 S-adenosyl-L-homocysteine + 3 H(+). The enzyme catalyses N-terminal L-seryl-L-prolyl-L-lysyl-[protein] + 3 S-adenosyl-L-methionine = N-terminal N,N,N-trimethyl-L-seryl-L-prolyl-L-lysyl-[protein] + 3 S-adenosyl-L-homocysteine + 3 H(+). It catalyses the reaction N-terminal L-prolyl-L-prolyl-L-lysyl-[protein] + 2 S-adenosyl-L-methionine = N-terminal N,N-dimethyl-L-prolyl-L-prolyl-L-lysyl-[protein] + 2 S-adenosyl-L-homocysteine + 2 H(+). Alpha-N-methyltransferase that methylates the N-terminus of target proteins containing the N-terminal motif [Ala/Pro/Ser]-Pro-Lys when the initiator Met is cleaved. Specifically catalyzes mono-, di- or tri-methylation of exposed alpha-amino group of Ala or Ser residue in the [Ala/Ser]-Pro-Lys motif and mono- or di-methylation of Pro in the Pro-Pro-Lys motif. This chain is Alpha N-terminal protein methyltransferase 1, found in Oryza sativa subsp. japonica (Rice).